Here is a 200-residue protein sequence, read N- to C-terminus: 3-isopropylmalate dehydratase small subunit (200 aa).

It belongs to the LeuD family. LeuD type 1 subfamily. As to quaternary structure, heterodimer of LeuC and LeuD.

It catalyses the reaction (2R,3S)-3-isopropylmalate = (2S)-2-isopropylmalate. Its pathway is amino-acid biosynthesis; L-leucine biosynthesis; L-leucine from 3-methyl-2-oxobutanoate: step 2/4. In terms of biological role, catalyzes the isomerization between 2-isopropylmalate and 3-isopropylmalate, via the formation of 2-isopropylmaleate. The polypeptide is 3-isopropylmalate dehydratase small subunit (Aliivibrio salmonicida (strain LFI1238) (Vibrio salmonicida (strain LFI1238))).